We begin with the raw amino-acid sequence, 170 residues long: Adenine phosphoribosyltransferase (170 aa).

This sequence belongs to the purine/pyrimidine phosphoribosyltransferase family. As to quaternary structure, homodimer.

Its subcellular location is the cytoplasm. The catalysed reaction is AMP + diphosphate = 5-phospho-alpha-D-ribose 1-diphosphate + adenine. The protein operates within purine metabolism; AMP biosynthesis via salvage pathway; AMP from adenine: step 1/1. Catalyzes a salvage reaction resulting in the formation of AMP, that is energically less costly than de novo synthesis. The polypeptide is Adenine phosphoribosyltransferase (Fusobacterium nucleatum subsp. nucleatum (strain ATCC 25586 / DSM 15643 / BCRC 10681 / CIP 101130 / JCM 8532 / KCTC 2640 / LMG 13131 / VPI 4355)).